The primary structure comprises 714 residues: Kinesin-like protein KIN-13 (714 aa).

The SAM domain occupies 1-63; the sequence is MSDLVYQWLE…FRLITTLKSR (63 aa). Residues 69–81 are compositionally biased toward polar residues; the sequence is QQPSAPNTGATPQ. Disordered stretches follow at residues 69–109 and 122–161; these read QQPS…NDIQ and GGYE…NPRG. The span at 82–92 shows a compositional bias: low complexity; sequence SVPSSHVSPHV. The span at 151-160 shows a compositional bias: pro residues; it reads PNAPNPPNPR. A Kinesin motor domain is found at 183–515; sequence RIRVVIRKRP…LRYADRVKEL (333 aa). Position 273–280 (273–280) interacts with ATP; the sequence is GQTGSGKS.

Belongs to the TRAFAC class myosin-kinesin ATPase superfamily. Kinesin family. KIN-13 subfamily. In terms of assembly, interacts with PLK. In terms of processing, phosphorylated by PLK.

The protein resides in the cytoplasm. It is found in the cytoskeleton. Its subcellular location is the cell projection. It localises to the cilium. The protein localises to the flagellum. The protein resides in the flagellum basal body. It is found in the flagellum axoneme. Its subcellular location is the spindle. It localises to the chromosome. The protein localises to the centromere. The protein resides in the kinetochore. In terms of biological role, involved in cell cycle. Involved in formation of flagella, regulation of flagellar length, and formation of median bodies during interphase. Regulates flagellar length in all eight distal flagellar tips by promoting disassembly of the microtubules. Disassembles microtubules at the distal flagellar tips in a length-dependent manner in order to maintain different equilibrium lengths of the four flagellar pairs. Regulates interphase and mitotic microtubule dynamics. Regulates microtubule disassembly dynamics of the dual mitotic spindles and the median body. In Giardia intestinalis (strain ATCC 50803 / WB clone C6) (Giardia lamblia), this protein is Kinesin-like protein KIN-13.